The following is a 1260-amino-acid chain: Neural cell adhesion molecule L1 (1260 aa).

The signal sequence occupies residues 1–19 (MVVMLRYVWPLLLCSPCLL). The Extracellular portion of the chain corresponds to 20 to 1123 (IQIPDEYKGH…VSTTGSFASE (1104 aa)). Ig-like C2-type domains lie at 35 to 130 (PVIT…IQLV), 138 to 225 (PKET…EPID), 239 to 327 (PRLL…YYVT), 332 to 419 (PYWL…AYIY), 424 to 506 (PARI…NNVT), and 517 to 600 (TQIT…DEVE). Disulfide bonds link cysteine 57–cysteine 113 and cysteine 157–cysteine 208. N-linked (GlcNAc...) asparagine glycosylation is found at asparagine 100, asparagine 202, asparagine 246, and asparagine 293. Intrachain disulfides connect cysteine 263/cysteine 311 and cysteine 353/cysteine 403. N-linked (GlcNAc...) asparagine glycosylation is found at asparagine 432, asparagine 478, asparagine 489, and asparagine 504. The cysteines at positions 447 and 496 are disulfide-linked. A disulfide bridge connects residues cysteine 538 and cysteine 590. Short sequence motifs (cell attachment site) lie at residues 553 to 555 (RGD) and 562 to 564 (RGD). 2 N-linked (GlcNAc...) asparagine glycosylation sites follow: asparagine 587 and asparagine 670. 5 consecutive Fibronectin type-III domains span residues 613–711 (PVPH…TPEA), 716–809 (NPVD…SGED), 811–916 (PQVS…PEGV), 919–1015 (HPEA…MALF), and 1014–1112 (LFGK…TGPV). Residues 697 to 724 (GEPSPVSESVVTPEAAPEKNPVDVRGEG) are disordered. The segment covering 712 to 724 (APEKNPVDVRGEG) has biased composition (basic and acidic residues). N-linked (GlcNAc...) asparagine glycosylation is found at asparagine 725, asparagine 776, asparagine 824, asparagine 848, asparagine 875, asparagine 968, asparagine 978, asparagine 1022, asparagine 1030, asparagine 1073, and asparagine 1107. A helical membrane pass occupies residues 1124-1146 (GWFIAFVSAIILLLLILLILCFI). Residues 1147 to 1260 (KRSKGGKYSV…SPINPAVALE (114 aa)) are Cytoplasmic-facing. Residues serine 1166, serine 1181, serine 1184, serine 1197, serine 1246, serine 1247, and serine 1251 each carry the phosphoserine modification. Disordered stretches follow at residues 1183-1210 (ESDN…SDDS) and 1229-1260 (IGQY…VALE). Residues 1244-1253 (NDSSGATSPI) are compositionally biased toward polar residues.

It belongs to the immunoglobulin superfamily. L1/neurofascin/NgCAM family. In terms of assembly, interacts with SHTN1; the interaction occurs in axonal growth cones. Interacts with isoform 2 of BSG. As to expression, expressed in the brain, including in the molecular layer of the cerebellar cortex, the fiber-rich layers of the hippocampus (alveus, and strata lacunosum moleculare, radiatum, and oriens), the nerve fiber layer and the inner and outer plexiform layers of the retina, and in the molecular layer of the olfactory bulb (at protein level).

It localises to the cell membrane. It is found in the cell projection. The protein localises to the growth cone. Neural cell adhesion molecule involved in the dynamics of cell adhesion and in the generation of transmembrane signals at tyrosine kinase receptors. During brain development, critical in multiple processes, including neuronal migration, axonal growth and fasciculation, and synaptogenesis. In the mature brain, plays a role in the dynamics of neuronal structure and function, including synaptic plasticity. In Mus musculus (Mouse), this protein is Neural cell adhesion molecule L1 (L1cam).